A 244-amino-acid chain; its full sequence is Phosphoadenosine 5'-phosphosulfate reductase (244 aa).

Cys239 acts as the Nucleophile; cysteine thiosulfonate intermediate in catalysis.

Belongs to the PAPS reductase family. CysH subfamily.

It localises to the cytoplasm. It carries out the reaction [thioredoxin]-disulfide + sulfite + adenosine 3',5'-bisphosphate + 2 H(+) = [thioredoxin]-dithiol + 3'-phosphoadenylyl sulfate. It functions in the pathway sulfur metabolism; hydrogen sulfide biosynthesis; sulfite from sulfate: step 3/3. In terms of biological role, catalyzes the formation of sulfite from phosphoadenosine 5'-phosphosulfate (PAPS) using thioredoxin as an electron donor. The chain is Phosphoadenosine 5'-phosphosulfate reductase from Shigella flexneri.